The chain runs to 447 residues: MSDYLSVSSLTKYLKLKFDRDPYLERVYLTGQVSNFRRRPNHQYFSLKDEKAVIQATMWSGIYRKLGFELEEGMKINVIGRVQLYEPSGSYSIIIEKAEPDGIGALAVQFEQLKKKLAEAGYFDDRHKQRLSQFVKKIGVVTSPSGAVIRDIITTVSRRFPGVDILLFPTKVQGEGAAQEVADNIRLANERTDLDLLIVGRGGGSIEDLWAFNEEIVVQAIFESHLPIISSVGHETDTTLADFAADRRAATPTAAAELATPVTKADLLAFLKERQMRSYQAVMRLIRQKDEQVKKLQRSVIFRQPERLYDAYVQKLDHLRTHLLTKVRQVYDVYDSKEHLLRQRLLSFNLSGCIQRYQAQLKQDQRLLLSHMSSQYDSKLARFEKAQDALLSLDTTRIVARGYAIVQKDNHIIQSTQQIKKGDRLHLEMKDGQVQVEVENVKQEENI.

The protein belongs to the XseA family. As to quaternary structure, heterooligomer composed of large and small subunits.

It localises to the cytoplasm. The enzyme catalyses Exonucleolytic cleavage in either 5'- to 3'- or 3'- to 5'-direction to yield nucleoside 5'-phosphates.. Functionally, bidirectionally degrades single-stranded DNA into large acid-insoluble oligonucleotides, which are then degraded further into small acid-soluble oligonucleotides. This chain is Exodeoxyribonuclease 7 large subunit, found in Streptococcus mutans serotype c (strain ATCC 700610 / UA159).